Reading from the N-terminus, the 1064-residue chain is Carbamoyl phosphate synthase large chain (1064 aa).

The carboxyphosphate synthetic domain stretch occupies residues 1–401; it reads MPKRNDIKKI…SLLKAVRSLE (401 aa). ATP contacts are provided by Arg129, Arg169, Gly175, Gly176, Glu208, Ile210, Glu215, Gly241, Val242, His243, Gln284, and Glu298. The ATP-grasp 1 domain occupies 133–327; that stretch reads KELCERIGEP…IAKMSAKIAI (195 aa). Positions 284, 298, and 300 each coordinate Mg(2+). 3 residues coordinate Mn(2+): Gln284, Glu298, and Asn300. Residues 402–546 form an oligomerization domain region; sequence IGVFHNDLQE…YSTYEWENES (145 aa). The carbamoyl phosphate synthetic domain stretch occupies residues 547-929; that stretch reads KRSSKEKIIV…ALYKSFEAAK (383 aa). In terms of domain architecture, ATP-grasp 2 spans 671–861; that stretch reads EKALQDLEIP…MAQLATQMIL (191 aa). ATP contacts are provided by Arg707, Ser746, Leu748, Glu752, Gly777, Val778, His779, Ser780, Gln820, and Glu832. Residues Gln820, Glu832, and Asn834 each coordinate Mg(2+). 3 residues coordinate Mn(2+): Gln820, Glu832, and Asn834. The MGS-like domain occupies 930 to 1064; that stretch reads LHMADYGSVL…QSRSFTTKNI (135 aa). Positions 930–1064 are allosteric domain; the sequence is LHMADYGSVL…QSRSFTTKNI (135 aa).

The protein belongs to the CarB family. In terms of assembly, composed of two chains; the small (or glutamine) chain promotes the hydrolysis of glutamine to ammonia, which is used by the large (or ammonia) chain to synthesize carbamoyl phosphate. Tetramer of heterodimers (alpha,beta)4. Mg(2+) serves as cofactor. Requires Mn(2+) as cofactor.

The enzyme catalyses hydrogencarbonate + L-glutamine + 2 ATP + H2O = carbamoyl phosphate + L-glutamate + 2 ADP + phosphate + 2 H(+). It carries out the reaction hydrogencarbonate + NH4(+) + 2 ATP = carbamoyl phosphate + 2 ADP + phosphate + 2 H(+). It functions in the pathway amino-acid biosynthesis; L-arginine biosynthesis; carbamoyl phosphate from bicarbonate: step 1/1. The protein operates within pyrimidine metabolism; UMP biosynthesis via de novo pathway; (S)-dihydroorotate from bicarbonate: step 1/3. Large subunit of the glutamine-dependent carbamoyl phosphate synthetase (CPSase). CPSase catalyzes the formation of carbamoyl phosphate from the ammonia moiety of glutamine, carbonate, and phosphate donated by ATP, constituting the first step of 2 biosynthetic pathways, one leading to arginine and/or urea and the other to pyrimidine nucleotides. The large subunit (synthetase) binds the substrates ammonia (free or transferred from glutamine from the small subunit), hydrogencarbonate and ATP and carries out an ATP-coupled ligase reaction, activating hydrogencarbonate by forming carboxy phosphate which reacts with ammonia to form carbamoyl phosphate. In Lactococcus lactis subsp. lactis (strain IL1403) (Streptococcus lactis), this protein is Carbamoyl phosphate synthase large chain.